Here is a 211-residue protein sequence, read N- to C-terminus: Large ribosomal subunit protein uL4 (211 aa).

Polar residues predominate over residues 41–52 (QTNARQGTASTK). The tract at residues 41 to 78 (QTNARQGTASTKTRAEVRGGGRKPWRQKGTGRARAGSI) is disordered. Over residues 60–71 (GGRKPWRQKGTG) the composition is skewed to basic residues.

Belongs to the universal ribosomal protein uL4 family. As to quaternary structure, part of the 50S ribosomal subunit.

One of the primary rRNA binding proteins, this protein initially binds near the 5'-end of the 23S rRNA. It is important during the early stages of 50S assembly. It makes multiple contacts with different domains of the 23S rRNA in the assembled 50S subunit and ribosome. In terms of biological role, forms part of the polypeptide exit tunnel. The protein is Large ribosomal subunit protein uL4 of Rippkaea orientalis (strain PCC 8801 / RF-1) (Cyanothece sp. (strain PCC 8801)).